The chain runs to 274 residues: E3 ubiquitin-protein ligase complex SLX5-SLX8 subunit SLX8 (274 aa).

Disordered stretches follow at residues 1-117 and 136-159; these read MARR…GNNI and ANTP…TNSK. Positions 13–28 are enriched in basic and acidic residues; that stretch reads ENLRIKRVRLESVRQN. Phosphoserine is present on Ser-50. Thr-66 is modified (phosphothreonine). Residues 66–75 are compositionally biased toward acidic residues; sequence TSEEDGDDDL. Ser-67 is modified (phosphoserine). Over residues 97-108 the composition is skewed to basic and acidic residues; sequence GNHDRETMHTEE. The segment at 206–250 adopts an RING-type zinc-finger fold; it reads CPICFEPPETALMTLCGHVFCCPCLFQMVNSSRTCRQFGHCALCR.

Component of the heterodimeric SUMO-targeted ubiquitin ligase (STUbL) complex composed of SLX5 and SLX8.

It is found in the nucleus. The protein localises to the chromosome. Its subcellular location is the centromere. The protein resides in the kinetochore. The enzyme catalyses S-ubiquitinyl-[E2 ubiquitin-conjugating enzyme]-L-cysteine + [acceptor protein]-L-lysine = [E2 ubiquitin-conjugating enzyme]-L-cysteine + N(6)-ubiquitinyl-[acceptor protein]-L-lysine.. It functions in the pathway protein modification; protein ubiquitination. In terms of biological role, component of the SUMO-targeted ubiquitin ligase (STUbL) complex SLX5/SLX8 that mediates ubiquitination and subsequent desumoylation of sumoylated proteins and proteins containing SUMO-like domains for their degradation. The STUbL complex SLX5/SLX8 stimulates ubiquitin conjugating enzymes, including UBC1, UBC4, UBC5 and UBC13-MMS2, and mediates the proteolytic down-regulation of sumoylated proteins. The STUbL complex SLX5/SLX8 is involved in ubiquitin-mediated degradation of histone variant CSE4, preventing mislocalization to euchromatin. The complex plays an essential role in maintenance of chromosome stability and links SUMO-dependent ubiquitination to a centromere-specific function during mitosis. The complex is involved in proteolysis of spindle positioning protein KAR9 and ensures correct spindle function by regulating levels of microtubule-associated proteins. During replication, the complex helps to prevent DNA lesions via recombination and has a role in localizing the DNA damage protein DCD2. The complex especially ubiquitinates the nuclease YEN1 and prevents persistent accumulation of a fraction of YEN1 associated with sites of activity in late G2/M and helps maintain the balance between pro- and anti-crossover pathways during homologous recombination. It is also involved in ubiquitin-mediated degradation of DNA repair proteins RAD52 and RAD57. Finally, the complex is recruited to distinct genomic hotspots of non-H2B protein ubiquitination (ub-hotspots) by the sumoylated transcription factor-like protein EUC1 where it ubiquitinates EUC1 and presumably other targets. The polypeptide is E3 ubiquitin-protein ligase complex SLX5-SLX8 subunit SLX8 (SLX8) (Saccharomyces cerevisiae (strain ATCC 204508 / S288c) (Baker's yeast)).